A 95-amino-acid chain; its full sequence is MKGSSALLLVALSLLCVCGLTRAEDDNEFFMEFLQTLLVGTPEELYEGPLGKYNVNDMAKSALRELKSCIDELQPVHKEQLVKLLVQVLDAQEDT.

A signal peptide spans 1–23 (MKGSSALLLVALSLLCVCGLTRA).

It belongs to the secretoglobin family.

The protein localises to the secreted. This Mus musculus (Mouse) protein is Secretoglobin family 1C member 1 (Scgb1c1).